The sequence spans 408 residues: Homogentisate geranylgeranyltransferase (408 aa).

A chloroplast-targeting transit peptide spans 1-62 (MQAVTAAAAA…TVMHKFSAIS (62 aa)). Transmembrane regions (helical) follow at residues 122–142 (HTIF…MKSI), 156–176 (ALTA…LYDI), 194–214 (SVAT…SIGI), 221–241 (LMCA…EAPF), 248–268 (ALLA…LAFF), 286–306 (LVFA…FKDI), 329–349 (VYQL…LVGA), 352–372 (TNLF…LTLW), and 386–406 (VTSF…LIPF).

The protein belongs to the UbiA prenyltransferase family. As to expression, expressed in seeds.

It is found in the plastid. It localises to the chloroplast membrane. The enzyme catalyses homogentisate + (2E,6E,10E)-geranylgeranyl diphosphate + H(+) = 6-geranylgeranyl-2-methylbenzene-1,4-diol + CO2 + diphosphate. The protein operates within cofactor biosynthesis; tocopherol biosynthesis. Functionally, involved in the synthesis of tocotrienol (vitamin E). Catalyzes the condensation of homogentisate and geranylgeranyl diphosphate to form 2-methyl-6-geranylgeranylbenzoquinol. Possesses low activity with phytyl diphosphate as substrate. The polypeptide is Homogentisate geranylgeranyltransferase (Hordeum vulgare (Barley)).